A 233-amino-acid chain; its full sequence is NAD-dependent protein deacylase (233 aa).

One can recognise a Deacetylase sirtuin-type domain in the interval M1 to D230. G9 to W28 contacts NAD(+). 2 residues coordinate substrate: Y53 and R56. Q88–D91 contributes to the NAD(+) binding site. H106 acts as the Proton acceptor in catalysis. Residues C114, C117, C133, and C136 each coordinate Zn(2+). Residues G172–S174 and I213 contribute to the NAD(+) site.

It belongs to the sirtuin family. Class III subfamily. Zn(2+) serves as cofactor.

Its subcellular location is the cytoplasm. It catalyses the reaction N(6)-acetyl-L-lysyl-[protein] + NAD(+) + H2O = 2''-O-acetyl-ADP-D-ribose + nicotinamide + L-lysyl-[protein]. It carries out the reaction N(6)-succinyl-L-lysyl-[protein] + NAD(+) + H2O = 2''-O-succinyl-ADP-D-ribose + nicotinamide + L-lysyl-[protein]. Functionally, NAD-dependent lysine deacetylase and desuccinylase that specifically removes acetyl and succinyl groups on target proteins. Modulates the activities of several proteins which are inactive in their acylated form. The chain is NAD-dependent protein deacylase from Campylobacter jejuni (strain RM1221).